Consider the following 154-residue polypeptide: Protein X (154 aa).

A mitochondrial targeting sequence region spans residues 68–117 (PCALRFTSARRMETTVNAHQILPKVLHKRTLGLSAMSTTDLEAYFKDCLF).

This sequence belongs to the orthohepadnavirus protein X family. In terms of assembly, may form homodimer. May interact with host CEBPA, CFLAR, CREB1, DDB1, E4F1, HBXIP, HSPD1/HSP60, NFKBIA, POLR2E and SMAD4. Interacts with host SMC5-SMC6 complex and induces its degradation. Interacts with host TRPC4AP; leading to prevent ubiquitination of TRPC4AP. Interacts with host PLSCR1; this interaction promotes ubiquitination and degradation of HBx and impairs HBx-mediated cell proliferation. Post-translationally, a fraction may be phosphorylated in insect cells and HepG2 cells, a human hepatoblastoma cell line. Phosphorylated in vitro by host protein kinase C or mitogen-activated protein kinase. N-acetylated in insect cells.

Its subcellular location is the host cytoplasm. It localises to the host nucleus. It is found in the host mitochondrion. In terms of biological role, multifunctional protein that plays a role in silencing host antiviral defenses and promoting viral transcription. Does not seem to be essential for HBV infection. May be directly involved in development of cirrhosis and liver cancer (hepatocellular carcinoma). Most of cytosolic activities involve modulation of cytosolic calcium. The effect on apoptosis is controversial depending on the cell types in which the studies have been conducted. May induce apoptosis by localizing in mitochondria and causing loss of mitochondrial membrane potential. May also modulate apoptosis by binding host CFLAR, a key regulator of the death-inducing signaling complex (DISC). Promotes viral transcription by using the host E3 ubiquitin ligase DDB1 to target the SMC5-SMC6 complex to proteasomal degradation. This host complex would otherwise bind to viral episomal DNA, and prevents its transcription. Moderately stimulates transcription of many different viral and cellular transcription elements. Promoters and enhancers stimulated by HBx contain DNA binding sites for NF-kappa-B, AP-1, AP-2, c-EBP, ATF/CREB, or the calcium-activated factor NF-AT. The sequence is that of Protein X from Hepatitis B virus genotype E (isolate Cote d'Ivoire/ABI-212/2003) (HBV-E).